The primary structure comprises 366 residues: Zinc-regulated GTPase metalloprotein activator 1 (366 aa).

Residues 5–12 (DECPELVP) carry the psi-PxLVp motif motif. 31–38 (GYLGAGKT) contacts GTP. Zn(2+)-binding residues include C89, C91, and C92. A CXCC motif motif is present at residues 89–92 (CLCC). GTP-binding positions include 92-96 (CSVKD) and 185-188 (NKTD). The CobW C-terminal domain occupies 258 to 357 (TITFEVPGSV…GEILKKEFIS (100 aa)).

The protein belongs to the SIMIBI class G3E GTPase family. ZNG1 subfamily.

The protein resides in the nucleus. The enzyme catalyses GTP + H2O = GDP + phosphate + H(+). Functionally, zinc chaperone that directly transfers zinc cofactor to target metalloproteins, thereby activating them. Catalyzes zinc insertion into the active site of methionine aminopeptidase METAP1, which function to cleave the initiator methionine from polypeptides during or after protein translation. Mechanistically, the N-terminal psi-PxLVp motif binds to the C6H2-type zinc finger of inactive form of METAP1. After formation of the docked complex, zinc is transferred from the CXCC motif in the GTPase domain of ZNG1 to the zinc binding site in the peptidase domain of METAP1 in a process requiring GTP hydrolysis. GTP/GDP exchange is required for release of active METAP1. The sequence is that of Zinc-regulated GTPase metalloprotein activator 1 from Danio rerio (Zebrafish).